We begin with the raw amino-acid sequence, 263 residues long: uncharacterized protein (263 aa).

A Response regulatory domain is found at 6–121 (TAIIADDEPL…RLQTTCERVK (116 aa)). Residue D58 is modified to 4-aspartylphosphate. Residues 158 to 263 (IKATQGDDIH…RASQSLFKGM (106 aa)) enclose the HTH LytTR-type domain.

This is an uncharacterized protein from Vibrio parahaemolyticus serotype O3:K6 (strain RIMD 2210633).